A 427-amino-acid polypeptide reads, in one-letter code: Gamma-glutamyl phosphate reductase (427 aa).

It belongs to the gamma-glutamyl phosphate reductase family.

The protein localises to the cytoplasm. The catalysed reaction is L-glutamate 5-semialdehyde + phosphate + NADP(+) = L-glutamyl 5-phosphate + NADPH + H(+). It participates in amino-acid biosynthesis; L-proline biosynthesis; L-glutamate 5-semialdehyde from L-glutamate: step 2/2. In terms of biological role, catalyzes the NADPH-dependent reduction of L-glutamate 5-phosphate into L-glutamate 5-semialdehyde and phosphate. The product spontaneously undergoes cyclization to form 1-pyrroline-5-carboxylate. The protein is Gamma-glutamyl phosphate reductase of Rhizobium etli (strain ATCC 51251 / DSM 11541 / JCM 21823 / NBRC 15573 / CFN 42).